We begin with the raw amino-acid sequence, 1077 residues long: Semaphorin-5A (1077 aa).

The N-terminal stretch at 1–21 is a signal peptide; sequence MKGACILAWLFSSLGVWRLAR. At 22–971 the chain is on the extracellular side; sequence PETQDPAKCQ…RCGEFNMFHM (950 aa). The Sema domain maps to 35 to 484; it reads HPVVSYKEIG…LQEHVAKIPL (450 aa). 2 disulfides stabilise this stretch: cysteine 104–cysteine 114 and cysteine 131–cysteine 140. Residues asparagine 147, asparagine 168, asparagine 227, and asparagine 277 are each glycosylated (N-linked (GlcNAc...) asparagine). Cystine bridges form between cysteine 254–cysteine 357 and cysteine 278–cysteine 320. N-linked (GlcNAc...) asparagine glycans are attached at residues asparagine 323 and asparagine 367. 2 disulfide bridges follow: cysteine 487-cysteine 504 and cysteine 496-cysteine 513. N-linked (GlcNAc...) asparagine glycans are attached at residues asparagine 536 and asparagine 591. 7 consecutive TSP type-1 domains span residues 540–593, 595–651, 653–702, 707–765, 784–839, 841–896, and 897–944; these read DGSF…TNCS, NGGW…LLCP, HVFW…NACP, TTPW…GCST, NGAW…LPCP, DGVW…QTCP, and ESWS…VFDS. 6 disulfide bridges follow: cysteine 607/cysteine 644, cysteine 611/cysteine 650, cysteine 622/cysteine 634, cysteine 665/cysteine 696, cysteine 669/cysteine 701, and cysteine 680/cysteine 686. Asparagine 717 carries an N-linked (GlcNAc...) asparagine glycan. 6 disulfide bridges follow: cysteine 796-cysteine 833, cysteine 800-cysteine 838, cysteine 811-cysteine 823, cysteine 853-cysteine 890, cysteine 857-cysteine 895, and cysteine 868-cysteine 880. N-linked (GlcNAc...) asparagine glycosylation occurs at asparagine 933. Residues 972–992 traverse the membrane as a helical segment; the sequence is FHMMAVGLSSSILGCLLTLLV. Residues 993–1077 are Cytoplasmic-facing; the sequence is YTYCQRYQQQ…FTDLNNYDEY (85 aa).

It belongs to the semaphorin family. As to quaternary structure, binds PLXNB3. In terms of tissue distribution, in adult, detected in liver, brain, kidney, heart, lung and spleen.

It localises to the membrane. Bifunctional axonal guidance cue regulated by sulfated proteoglycans; attractive effects result from interactions with heparan sulfate proteoglycans (HSPGs), while the inhibitory effects depend on interactions with chondroitin sulfate proteoglycans (CSPGs). Ligand for receptor PLXNB3. In glioma cells, SEMA5A stimulation of PLXNB3 results in the disassembly of F-actin stress fibers, disruption of focal adhesions and cellular collapse as well as inhibition of cell migration and invasion through ARHGDIA-mediated inactivation of RAC1. May promote angiogenesis by increasing endothelial cell proliferation and migration and inhibiting apoptosis. The chain is Semaphorin-5A (Sema5a) from Mus musculus (Mouse).